Consider the following 668-residue polypeptide: DNA ligase (668 aa).

NAD(+) contacts are provided by residues 31-35, 80-81, and Glu112; these read DAEYD and SL. Residue Lys114 is the N6-AMP-lysine intermediate of the active site. Residues Arg135, Glu172, Lys289, and Lys313 each coordinate NAD(+). The Zn(2+) site is built by Cys407, Cys410, Cys425, and Cys431. Positions 591–668 constitute a BRCT domain; sequence SVPQPLAGKV…NEEQLIELLN (78 aa).

This sequence belongs to the NAD-dependent DNA ligase family. LigA subfamily. It depends on Mg(2+) as a cofactor. Requires Mn(2+) as cofactor.

It carries out the reaction NAD(+) + (deoxyribonucleotide)n-3'-hydroxyl + 5'-phospho-(deoxyribonucleotide)m = (deoxyribonucleotide)n+m + AMP + beta-nicotinamide D-nucleotide.. Functionally, DNA ligase that catalyzes the formation of phosphodiester linkages between 5'-phosphoryl and 3'-hydroxyl groups in double-stranded DNA using NAD as a coenzyme and as the energy source for the reaction. It is essential for DNA replication and repair of damaged DNA. This chain is DNA ligase, found in Aliivibrio fischeri (strain ATCC 700601 / ES114) (Vibrio fischeri).